Consider the following 1400-residue polypeptide: DNA-directed RNA polymerase subunit beta' (1400 aa).

Cysteine 71, cysteine 73, cysteine 86, and cysteine 89 together coordinate Zn(2+). Residues aspartate 462, aspartate 464, and aspartate 466 each contribute to the Mg(2+) site. 4 residues coordinate Zn(2+): cysteine 820, cysteine 893, cysteine 900, and cysteine 903.

It belongs to the RNA polymerase beta' chain family. As to quaternary structure, the RNAP catalytic core consists of 2 alpha, 1 beta, 1 beta' and 1 omega subunit. When a sigma factor is associated with the core the holoenzyme is formed, which can initiate transcription. The cofactor is Mg(2+). Requires Zn(2+) as cofactor.

The catalysed reaction is RNA(n) + a ribonucleoside 5'-triphosphate = RNA(n+1) + diphosphate. Its function is as follows. DNA-dependent RNA polymerase catalyzes the transcription of DNA into RNA using the four ribonucleoside triphosphates as substrates. This Methylobacterium sp. (strain 4-46) protein is DNA-directed RNA polymerase subunit beta'.